Consider the following 300-residue polypeptide: Alpha-tubulin N-acetyltransferase 1 (300 aa).

Residues 1-190 (MEFPFDVDAL…NNFVIFEGFF (190 aa)) form the N-acetyltransferase domain. Lys-56 bears the N6-acetyllysine; by autocatalysis mark. 124-137 (FYIHESLQRHGHGR) is an acetyl-CoA binding site. Lys-146 is modified (N6-acetyllysine; by autocatalysis). 160-169 (SQKLLKFLNK) serves as a coordination point for acetyl-CoA. An N6-acetyllysine; by autocatalysis mark is found at Lys-210 and Lys-221. 2 disordered regions span residues 229-263 (PLNRAPRRATPPAHPPPRSSSLGNSPERGPLRPFV) and 280-300 (TARLLLATDPGGSPAQRRRTR). Phosphoserine occurs at positions 249 and 253. Arg-282 carries the asymmetric dimethylarginine modification. Ser-292 carries the post-translational modification Phosphoserine. Arg-300 bears the Omega-N-methylarginine mark.

It belongs to the acetyltransferase ATAT1 family. In terms of assembly, component of the BBSome complex. Interacts with AP2 alpha-adaptins, including AP2A2, but not with AP1 gamma-adaptin (AP1G1/AP1G2); this interaction is required for efficient alpha-tubulin acetylation, hence clathrin-coated pits are sites of microtubule acetylation. Autoacetylation strongly increases tubulin acetylation.

The protein resides in the cytoplasm. The protein localises to the membrane. Its subcellular location is the clathrin-coated pit. It is found in the cell junction. It localises to the focal adhesion. The protein resides in the cell projection. The protein localises to the axon. Its subcellular location is the cytoskeleton. It is found in the spindle. The enzyme catalyses L-lysyl-[alpha-tubulin] + acetyl-CoA = N(6)-acetyl-L-lysyl-[alpha-tubulin] + CoA + H(+). Its function is as follows. Specifically acetylates 'Lys-40' in alpha-tubulin on the lumenal side of microtubules. Promotes microtubule destabilization and accelerates microtubule dynamics; this activity may be independent of acetylation activity. Acetylates alpha-tubulin with a slow enzymatic rate, due to a catalytic site that is not optimized for acetyl transfer. Enters the microtubule through each end and diffuses quickly throughout the lumen of microtubules. Acetylates only long/old microtubules because of its slow acetylation rate since it does not have time to act on dynamically unstable microtubules before the enzyme is released. Required for normal sperm flagellar function. Promotes directional cell locomotion and chemotaxis, through AP2A2-dependent acetylation of alpha-tubulin at clathrin-coated pits that are concentrated at the leading edge of migrating cells. May facilitate primary cilium assembly. The sequence is that of Alpha-tubulin N-acetyltransferase 1 from Sus scrofa (Pig).